Reading from the N-terminus, the 339-residue chain is Dihydroorotate dehydrogenase (quinone) (339 aa).

Residues 61-65 (AGLDK) and threonine 85 each bind FMN. Position 65 (lysine 65) interacts with substrate. 110–114 (NRMGF) lines the substrate pocket. The FMN site is built by asparagine 138 and asparagine 171. Residue asparagine 171 coordinates substrate. The Nucleophile role is filled by serine 174. Asparagine 176 provides a ligand contact to substrate. FMN-binding residues include lysine 216 and threonine 244. 245 to 246 (NT) contributes to the substrate binding site. Residues glycine 267, glycine 296, and 317–318 (YS) contribute to the FMN site.

The protein belongs to the dihydroorotate dehydrogenase family. Type 2 subfamily. As to quaternary structure, monomer. The cofactor is FMN.

The protein localises to the cell membrane. The enzyme catalyses (S)-dihydroorotate + a quinone = orotate + a quinol. The protein operates within pyrimidine metabolism; UMP biosynthesis via de novo pathway; orotate from (S)-dihydroorotate (quinone route): step 1/1. Catalyzes the conversion of dihydroorotate to orotate with quinone as electron acceptor. In Saccharophagus degradans (strain 2-40 / ATCC 43961 / DSM 17024), this protein is Dihydroorotate dehydrogenase (quinone).